We begin with the raw amino-acid sequence, 317 residues long: MAELACFCYPHLENDSYKFIPFNSLAIKCMLTAKVDKKDQDKFYNSIIYGIAPPPQFKKRYNTNDNSRGMNYETSMFNKVAMLVCEALNSIKVTQSDVASVLSKVVSVRHLENLVLRRENHQDVLFHSKELLLKSVLIAVGHSKEIETTATAEGGEIVFQNAAFTMWRLTYLEHKLMPILDQNFIEYKITVNEDKPVLESHVKELIAELRWQYNKFAVITHGKGHYRVVKYSSVANHADRVYATFKSNNKNGNMLEFNLLDQRIIWQNWYAFTSSMKQGNTLDVCKRLLFQKMKRESNPFKGLSTDRKMDEVSQVGI.

Residues 107–109 (SVR), Lys-188, and 221–223 (HGK) contribute to the ATP site. Residues 205-241 (LIAELRWQYNKFAVITHGKGHYRVVKYSSVANHADRV) are RNA-binding. The active-site For NTPase and RTPase activities is the His-225. ATP is bound at residue Arg-227.

Belongs to the rotavirus NSP2 family. In terms of assembly, homooctamer. Interacts with VP1; this interaction is weak. Interacts with NSP5; this interaction leads to up-regulation of NSP5 phosphorylation and formation of viral factories. Interacts with host DCP1A, DCP1B, DDX6, EDC4 and EIF2S1/eIF2-alpha; these interactions are probably part of the sequestration of some host SGs and PBs proteins in viral factories. Requires Mg(2+) as cofactor.

Its subcellular location is the host cytoplasm. Functionally, participates in replication and packaging of the viral genome. Plays a crucial role, together with NSP5, in the formation of virus factories (viroplasms), which are large inclusions in the host cytoplasm where replication intermediates are assembled and viral RNA replication takes place. Displays ssRNA binding, NTPase, RNA triphosphatase (RTPase) and ATP-independent helix-unwinding activities. The unwinding activity may prepare and organize plus-strand RNAs for packaging and replication by removing interfering secondary structures. The RTPase activity plays a role in the removal of the gamma-phosphate from the rotavirus RNA minus strands of dsRNA genome segments. Participates in the selective exclusion of host proteins from stress granules (SG) and P bodies (PB). Also participates in the sequestration of these remodeled organelles in viral factories. The polypeptide is Non-structural protein 2 (Rotavirus A (strain RVA/Human/Indonesia/69M/1980/G8P4[10]) (RV-A)).